A 532-amino-acid polypeptide reads, in one-letter code: 5-methylcytosine-modifying enzyme 1 (532 aa).

Residue 335–337 (SLT) coordinates L-ascorbate. Residues His345, Asp347, and His397 each coordinate Fe cation. 397 to 399 (HGT) lines the L-ascorbate pocket.

The protein belongs to the TET family. The cofactor is Fe(2+).

The protein resides in the nucleus. It catalyses the reaction a 5-methyl-2'-deoxycytidine in DNA + L-ascorbate + O2 = a (8S,9S)-5-glyceryl-2'-deoxycytidine in DNA + glyoxylate + CO2. The enzyme catalyses a 5-methyl-2'-deoxycytidine in DNA + L-ascorbate + O2 = a (8S,9R)-5-glyceryl-2'-deoxycytidine in DNA + glyoxylate + CO2. Its function is as follows. Dioxygenase that catalyzes DNA modification by mediating the conversion of the modified genomic base 5-methylcytosine (5mC) into 5-glyceryl-methylcytosine (5gmC). Catalyzes the conjugation of a glyceryl moiety from L-ascorbate (vitamin C) to the methyl group of 5mC through a carbon-carbon bond. 5gmC DNA modification may be required during photosynthesis as an epigenetic mark that couteracts DNA methylation. This is 5-methylcytosine-modifying enzyme 1 from Chlamydomonas reinhardtii (Chlamydomonas smithii).